A 1794-amino-acid chain; its full sequence is Non-reducing polyketide synthase nscA (1794 aa).

Residues Asp-19–His-256 are N-terminal acylcarrier protein transacylase domain (SAT). Residues Ala-389–Asp-822 form the Ketosynthase family 3 (KS3) domain. Positions Pro-427–Thr-448 are disordered. The segment covering Asp-428–Gly-440 has biased composition (basic and acidic residues). Catalysis depends on for beta-ketoacyl synthase activity residues Cys-562, His-697, and His-740. Positions Phe-928–Thr-1249 are malonyl-CoA:ACP transacylase (MAT) domain. Residues Thr-1314–Pro-1633 form a product template (PT) domain region. Residues His-1318–Ala-1454 form an N-terminal hotdog fold region. The PKS/mFAS DH domain maps to His-1318 to Asp-1628. The Proton acceptor; for dehydratase activity role is filled by His-1350. The tract at residues Ala-1482–Asp-1628 is C-terminal hotdog fold. The active-site Proton donor; for dehydratase activity is the Asp-1539. Disordered stretches follow at residues Ser-1637–Ala-1665 and Ala-1682–Val-1718. 2 stretches are compositionally biased toward polar residues: residues Gln-1644–Lys-1655 and Ser-1685–Pro-1701. The Carrier domain occupies Pro-1717–Cys-1794. Ser-1754 carries the post-translational modification O-(pantetheine 4'-phosphoryl)serine.

The cofactor is pantetheine 4'-phosphate.

The protein operates within secondary metabolite biosynthesis. Non-reducing polyketide synthase; part of the gene cluster that mediates the biosynthesis of neosartoricin, a prenylated anthracenone that exhibits T-cell antiproliferative activity, suggestive of a physiological role as an immunosuppressive agent. The non-reducing polyketide synthase nscA probably synthesizes and cyclizes the decaketide backbone. The hydrolase nscB then mediates the product release through hydrolysis followed by spontaneous decarboxylation. The prenyltransferase nscD catalyzes the addition of the dimethylallyl group to the aromatic C5. The FAD-dependent monooxygenase nscC is then responsible for the stereospecific hydroxylation at C2. There is no gene encoding O-acetyltransferase in the nsc gene cluster; thus, the last step of 2-O-acetylation leading to neosartoricin may be catalyzed by an unidentified O-acetyltransferase. This chain is Non-reducing polyketide synthase nscA, found in Neosartorya fischeri (strain ATCC 1020 / DSM 3700 / CBS 544.65 / FGSC A1164 / JCM 1740 / NRRL 181 / WB 181) (Aspergillus fischerianus).